Reading from the N-terminus, the 469-residue chain is Transcription factor SOX-10 (469 aa).

Disordered regions lie at residues 1 to 70 (MAEE…DDDK), 163 to 203 (LRMQ…QGGA), 215 to 278 (LDHR…DFGN), 357 to 378 (AQVKTETAGPQGPSHYSDQPST), and 436 to 469 (RPLYTAISDPSPSGPQSHSPTHWEQPVYTTLSRP). Residues 23–32 (LSPGSAPSLG) show a composition bias toward low complexity. S24 carries the phosphoserine modification. Residues 33–44 (PDGGGGGGGGSG) show a composition bias toward gly residues. The interval 65-105 (EADDDKFPVCIREAVSQVLSGYDWTLVPMPVRVNGASKSKP) is dimerization (DIM). The HMG box DNA-binding region spans 107 to 175 (VKRPMNAFMV…QHKKDHPDYK (69 aa)). 2 stretches are compositionally biased toward basic and acidic residues: residues 163–176 (LRMQHKKDHPDYKY) and 257–274 (ADPKRDGRSMGEGGKPHI). Residues 231 to 313 (PEHPSGQSHG…LPPNGHPGHV (83 aa)) are transactivation domain (TAM). The tract at residues 356–469 (KAQVKTETAG…QPVYTTLSRP (114 aa)) is transactivation domain (TAC). Residues 443-469 (SDPSPSGPQSHSPTHWEQPVYTTLSRP) are compositionally biased toward polar residues.

In terms of assembly, monomer. Interacts with ARMCX3 at the mitochondrial outer membrane surface. Interacts with PAX3.

The protein localises to the cytoplasm. The protein resides in the nucleus. It is found in the mitochondrion outer membrane. Transcription factor that plays a central role in developing and mature glia. Specifically activates expression of myelin genes, during oligodendrocyte (OL) maturation, such as DUSP15 and MYRF, thereby playing a central role in oligodendrocyte maturation and CNS myelination. Once induced, MYRF cooperates with SOX10 to implement the myelination program. Transcriptional activator of MITF, acting synergistically with PAX3. Transcriptional activator of MBP, via binding to the gene promoter. This is Transcription factor SOX-10 (SOX10) from Sus scrofa (Pig).